Consider the following 377-residue polypeptide: Actin-related protein 2/3 complex subunit 1 (377 aa).

WD repeat units lie at residues 9 to 48, 53 to 92, 98 to 139, 144 to 183, and 203 to 242; these read ILPK…WKHA, DHDK…TWKQ, RLNR…WVSK, PLRS…VDAK, and PSGG…QPPR. Positions 293 to 313 are disordered; sequence GTSKTSFTHTGNTGEGREEEG. Residues 342 to 376 form a WD 6 repeat; it reads VHQNMIATLRPYAGTPGNITAFTSSGTDGRVVLWT.

This sequence belongs to the WD repeat ARPC1 family. As to quaternary structure, component of the Arp2/3 complex composed of arp2, act2, arc1/p41-ARC, arc2/p34-ARC, arc3/p21-ARC, arc4/p20-ARC and arc5/p16-ARC.

It localises to the cytoplasm. The protein resides in the cytoskeleton. Its subcellular location is the actin patch. Functions as a component of the Arp2/3 complex which is involved in regulation of actin polymerization and together with an activating nucleation-promoting factor (NPF) mediates the formation of branched actin networks. This chain is Actin-related protein 2/3 complex subunit 1 (arc1), found in Schizosaccharomyces pombe (strain 972 / ATCC 24843) (Fission yeast).